A 234-amino-acid chain; its full sequence is Sugar fermentation stimulation protein A (234 aa).

Positions 201-220 (LLSEAQNKGVEVLAYKAELS) form a DNA-binding region, H-T-H motif.

The protein belongs to the SfsA family.

Binds to DNA non-specifically. Could be a regulatory factor involved in maltose metabolism. This is Sugar fermentation stimulation protein A from Salmonella gallinarum (strain 287/91 / NCTC 13346).